The primary structure comprises 118 residues: Large ribosomal subunit protein bL20 (118 aa).

This sequence belongs to the bacterial ribosomal protein bL20 family.

In terms of biological role, binds directly to 23S ribosomal RNA and is necessary for the in vitro assembly process of the 50S ribosomal subunit. It is not involved in the protein synthesizing functions of that subunit. The polypeptide is Large ribosomal subunit protein bL20 (Pseudoalteromonas atlantica (strain T6c / ATCC BAA-1087)).